The sequence spans 616 residues: Chaperone protein HtpG (616 aa).

An a; substrate-binding region spans residues 1-334; it reads MAEKQIHTFQ…TADLPLNVSR (334 aa). Residues 335-549 form a b region; the sequence is EILQGNKVVD…ENEMGGNMER (215 aa). The c stretch occupies residues 550 to 616; sequence IMKSLGQDVP…FVKRINKLIN (67 aa).

It belongs to the heat shock protein 90 family. As to quaternary structure, homodimer.

Its subcellular location is the cytoplasm. In terms of biological role, molecular chaperone. Has ATPase activity. The chain is Chaperone protein HtpG from Ruthia magnifica subsp. Calyptogena magnifica.